Here is a 102-residue protein sequence, read N- to C-terminus: ATP-dependent Clp protease adapter protein ClpS (102 aa).

Belongs to the ClpS family. Binds to the N-terminal domain of the chaperone ClpA.

Functionally, involved in the modulation of the specificity of the ClpAP-mediated ATP-dependent protein degradation. In Dechloromonas aromatica (strain RCB), this protein is ATP-dependent Clp protease adapter protein ClpS.